Here is a 328-residue protein sequence, read N- to C-terminus: tRNA uridine(34) hydroxylase (328 aa).

The 95-residue stretch at 130 to 224 (LDEDTVVLDT…YGKDPEVQGE (95 aa)) folds into the Rhodanese domain. Cys184 acts as the Cysteine persulfide intermediate in catalysis.

The protein belongs to the TrhO family.

It catalyses the reaction uridine(34) in tRNA + AH2 + O2 = 5-hydroxyuridine(34) in tRNA + A + H2O. In terms of biological role, catalyzes oxygen-dependent 5-hydroxyuridine (ho5U) modification at position 34 in tRNAs. In Streptococcus gordonii (strain Challis / ATCC 35105 / BCRC 15272 / CH1 / DL1 / V288), this protein is tRNA uridine(34) hydroxylase.